The primary structure comprises 836 residues: V-type proton ATPase subunit C (836 aa).

The segment covering 116 to 144 (LSLRHQRKHQHTHHQNKPQHYHHHHHHHQ) has biased composition (basic residues). Disordered stretches follow at residues 116–169 (LSLR…ASAP), 302–403 (APTT…SVQS), 415–453 (KPKRNSKKSSAQQQHETAQLQHQQTTQQHATPLTPQNHN), and 496–544 (PSQL…PLSP). Over residues 160 to 169 (ATPPAPASAP) the composition is skewed to pro residues. Low complexity predominate over residues 302–316 (APTTSSSVHSSMSRS). Composition is skewed to polar residues over residues 319–348 (KRLNNNTCSINNNKLSFRSGSHVSQLHLAT) and 364–374 (TNPLQSPVQKS). Residues 425 to 450 (AQQQHETAQLQHQQTTQQHATPLTPQ) show a composition bias toward low complexity. A compositionally biased stretch (polar residues) spans 496–511 (PSQLNINNGFNLTPTH). Low complexity predominate over residues 512–529 (RSSPVSSCCGSSSQGRSS).

Belongs to the V-ATPase C subunit family. In terms of assembly, V-ATPase is a heteromultimeric enzyme made up of two complexes: the ATP-hydrolytic V1 complex and the proton translocation V0 complex. The V1 complex consists of three catalytic AB heterodimers that form a heterohexamer, three peripheral stalks each consisting of EG heterodimers, one central rotor including subunits D and F, and the regulatory subunits C and H. The proton translocation complex V0 consists of the proton transport subunit a, a ring of proteolipid subunits c9c'', rotary subunit d, subunits e and f, and the accessory subunits VhaAC45 and ATP6AP2. In terms of tissue distribution, in larvae, expressed in the ring gland, CNS, imaginal disks and lymph gland.

Its function is as follows. Subunit of the V1 complex of vacuolar(H+)-ATPase (V-ATPase), a multisubunit enzyme composed of a peripheral complex (V1) that hydrolyzes ATP and a membrane integral complex (V0) that translocates protons. V-ATPase is responsible for acidifying and maintaining the pH of intracellular compartments and in some cell types, is targeted to the plasma membrane, where it is responsible for acidifying the extracellular environment. Subunit C is necessary for the assembly of the catalytic sector of the enzyme and is likely to have a specific function in its catalytic activity. In enterocytes, acts as part of a pHCl-2 sensory pathway which mediates Tor-dependent larval growth and metabolism in response to zinc availability. Likely acts in maintaining enterocyte lysosomal acidification which consequently promotes Tor activation at the lysosome membrane. In Drosophila melanogaster (Fruit fly), this protein is V-type proton ATPase subunit C (Vha44).